A 223-amino-acid chain; its full sequence is Kinetochore protein Spc25 (223 aa).

Positions 51–116 (RHQRKVGKLQ…QRKNEIMERI (66 aa)) form a coiled coil.

The protein belongs to the SPC25 family. As to quaternary structure, component of the Ndc80 complex, which is composed of Ndc80, Nuf2 and Spc25.

The protein localises to the nucleus. The protein resides in the chromosome. It localises to the centromere. It is found in the kinetochore. Acts as a component of the essential kinetochore-associated Ndc80 complex, which is required for chromosome segregation and spindle checkpoint activity during meiosis and mitosis. Required for kinetochore integrity and the organization of stable microtubule binding sites in the outer plate of the kinetochore. Participates in SAC signaling that responds specifically to disruptions in spindle microtubule dynamics. The NDC80 complex synergistically enhances the affinity of the SKA1 complex for microtubules and may allow the NDC80 complex to track depolymerizing microtubules. The polypeptide is Kinetochore protein Spc25 (Drosophila yakuba (Fruit fly)).